Consider the following 293-residue polypeptide: Zinc finger protein 80 (293 aa).

2 C2H2-type zinc fingers span residues 69–91 (YKCKECGKVFNKNSLLVRHHQIH) and 97–119 (YECQECGKAFHEKVDFVRHMRIH). The C2H2-type 3; atypical zinc finger occupies 125–147 (CKCVECGKVFNRRSHLLCYHQIH). 4 consecutive C2H2-type zinc fingers follow at residues 153–175 (YECSECGKTFSYHSVFIQHRMTH), 181–203 (FGCKECGKTFYYNSSLTRHMKIH), 209–231 (YKCGECGKTFTYHSVFFRHSMTH), and 237–259 (YECKECGKGFYYSYSLTRHTRSH).

The protein belongs to the krueppel C2H2-type zinc-finger protein family.

It localises to the nucleus. May be involved in transcriptional regulation. This is Zinc finger protein 80 (ZNF80) from Macaca mulatta (Rhesus macaque).